A 451-amino-acid polypeptide reads, in one-letter code: Glycylpeptide N-tetradecanoyltransferase (451 aa).

Residues 177 to 179 (LCI) and 185 to 189 (NKRLA) each bind tetradecanoyl-CoA. L451 (proton acceptor; via carboxylate) is an active-site residue.

It belongs to the NMT family. As to quaternary structure, monomer.

The protein resides in the cytoplasm. The catalysed reaction is N-terminal glycyl-[protein] + tetradecanoyl-CoA = N-tetradecanoylglycyl-[protein] + CoA + H(+). Its activity is regulated as follows. Competitively inhibited by SC-58272, a peptidomimetic derived from the N-terminal sequence of a natural substrate. Adds a myristoyl group to the N-terminal glycine residue of certain cellular proteins. Substrate specificity requires an N-terminal glycine in the nascent polypeptide substrates. Ser is present at position 5 in almost all known N-myristoyl proteins and Lys is commonly encountered at postion 6. Basic residues are preferred at positions 7 and 8. This is Glycylpeptide N-tetradecanoyltransferase (NMT1) from Candida albicans (strain SC5314 / ATCC MYA-2876) (Yeast).